The following is a 397-amino-acid chain: 1-carboxy-3-chloro-3,4-dihydroxycyclo hexa-1,5-diene dehydrogenase (397 aa).

To P.putida PHT4.

The polypeptide is 1-carboxy-3-chloro-3,4-dihydroxycyclo hexa-1,5-diene dehydrogenase (cbaC) (Comamonas testosteroni (Pseudomonas testosteroni)).